The primary structure comprises 486 residues: Siroheme synthase (486 aa).

Residues Met1–Val204 are precorrin-2 dehydrogenase /sirohydrochlorin ferrochelatase. NAD(+) is bound by residues His22–Ile23 and Glu43–Lys44. Ser128 is subject to Phosphoserine. A uroporphyrinogen-III C-methyltransferase region spans residues Gly216–Ala486. Pro225 contacts S-adenosyl-L-methionine. Residue Asp248 is the Proton acceptor of the active site. Lys270 (proton donor) is an active-site residue. S-adenosyl-L-methionine-binding positions include Gly301–Asp303, Val306, Thr331–Ala332, Met383, and Gly412.

It in the N-terminal section; belongs to the precorrin-2 dehydrogenase / sirohydrochlorin ferrochelatase family. The protein in the C-terminal section; belongs to the precorrin methyltransferase family.

It carries out the reaction uroporphyrinogen III + 2 S-adenosyl-L-methionine = precorrin-2 + 2 S-adenosyl-L-homocysteine + H(+). The enzyme catalyses precorrin-2 + NAD(+) = sirohydrochlorin + NADH + 2 H(+). It catalyses the reaction siroheme + 2 H(+) = sirohydrochlorin + Fe(2+). It functions in the pathway cofactor biosynthesis; adenosylcobalamin biosynthesis; precorrin-2 from uroporphyrinogen III: step 1/1. It participates in cofactor biosynthesis; adenosylcobalamin biosynthesis; sirohydrochlorin from precorrin-2: step 1/1. Its pathway is porphyrin-containing compound metabolism; siroheme biosynthesis; precorrin-2 from uroporphyrinogen III: step 1/1. The protein operates within porphyrin-containing compound metabolism; siroheme biosynthesis; siroheme from sirohydrochlorin: step 1/1. It functions in the pathway porphyrin-containing compound metabolism; siroheme biosynthesis; sirohydrochlorin from precorrin-2: step 1/1. In terms of biological role, multifunctional enzyme that catalyzes the SAM-dependent methylations of uroporphyrinogen III at position C-2 and C-7 to form precorrin-2 via precorrin-1. Then it catalyzes the NAD-dependent ring dehydrogenation of precorrin-2 to yield sirohydrochlorin. Finally, it catalyzes the ferrochelation of sirohydrochlorin to yield siroheme. In Actinobacillus pleuropneumoniae serotype 3 (strain JL03), this protein is Siroheme synthase.